Reading from the N-terminus, the 176-residue chain is 3-hydroxydecanoyl-[acyl-carrier-protein] dehydratase (176 aa).

His70 is an active-site residue.

It belongs to the thioester dehydratase family. FabA subfamily. As to quaternary structure, homodimer.

It localises to the cytoplasm. The enzyme catalyses a (3R)-hydroxyacyl-[ACP] = a (2E)-enoyl-[ACP] + H2O. The catalysed reaction is (3R)-hydroxydecanoyl-[ACP] = (2E)-decenoyl-[ACP] + H2O. It catalyses the reaction (2E)-decenoyl-[ACP] = (3Z)-decenoyl-[ACP]. The protein operates within lipid metabolism; fatty acid biosynthesis. Necessary for the introduction of cis unsaturation into fatty acids. Catalyzes the dehydration of (3R)-3-hydroxydecanoyl-ACP to E-(2)-decenoyl-ACP and then its isomerization to Z-(3)-decenoyl-ACP. Can catalyze the dehydratase reaction for beta-hydroxyacyl-ACPs with saturated chain lengths up to 16:0, being most active on intermediate chain length. This chain is 3-hydroxydecanoyl-[acyl-carrier-protein] dehydratase, found in Alkalilimnicola ehrlichii (strain ATCC BAA-1101 / DSM 17681 / MLHE-1).